Here is a 579-residue protein sequence, read N- to C-terminus: Folliculin (579 aa).

A disordered region spans residues 32–52 (GASCGDSIGQGEQAEDEEMGI). Positions 86 to 242 (RSLAAGHPGY…RNGNAARSLT (157 aa)) constitute a uDENN FLCN/SMCR8-type domain. Positions 337–491 (NMVQRRMGVF…ILNKIEAALS (155 aa)) constitute a cDENN FLCN/SMCR8-type domain. The region spanning 493–558 (ENLSMDVVDQ…LLKFWMTGLS (66 aa)) is the dDENN FLCN/SMCR8-type domain.

This sequence belongs to the folliculin family. Component of the lysosomal folliculin complex (LFC).

The protein resides in the lysosome membrane. It localises to the cytoplasm. Its subcellular location is the cytosol. The protein localises to the cell projection. It is found in the cilium. The protein resides in the cytoskeleton. It localises to the microtubule organizing center. Its subcellular location is the centrosome. The protein localises to the spindle. It is found in the nucleus. Its activity is regulated as follows. GTPase-activating activity is inhibited in the folliculin complex (LFC), which stabilizes the GDP-bound state of RagA/RRAGA (or RagB/RRAGB), because Arg-164 is located far from the RagC/RRAGC or RagD/RRAGD nucleotide pocket. Disassembly of the LFC complex upon amino acid restimulation liberates the GTPase-activating activity. Multi-functional protein, involved in both the cellular response to amino acid availability and in the regulation of glycolysis. GTPase-activating protein that plays a key role in the cellular response to amino acid availability through regulation of the non-canonical mTORC1 signaling cascade controlling the MiT/TFE factors tfeb and tfe3. Activates mTORC1 by acting as a GTPase-activating protein: specifically stimulates GTP hydrolysis by RagC/RRAGC or RagD/RRAGD, promoting the conversion to the GDP-bound state of RagC/RRAGC or RagD/RRAGD, and thereby activating the kinase activity of mTORC1. The GTPase-activating activity is inhibited during starvation and activated in presence of nutrients. Acts as a key component for non-canonical mTORC1-dependent control of the MiT/TFE factors tfeb and tfe3, while it is not involved in mTORC1-dependent phosphorylation of canonical RPS6KB1/S6K1 and EIF4EBP1/4E-BP1. In low-amino acid conditions, the lysosomal folliculin complex (LFC) is formed on the membrane of lysosomes, which inhibits the GTPase-activating activity of flcn, inactivates mTORC1 and maximizes nuclear translocation of tfeb and tfe3. Upon amino acid restimulation, RagA/RRAGA (or RagB/RRAGB) nucleotide exchange promotes disassembly of the LFC complex and liberates the GTPase-activating activity of flcn, leading to activation of mTORC1 and subsequent cytoplasmic retention of tfeb and tfe3. Required for the exit of hematopoietic stem cell from pluripotency by promoting mTOR-dependent cytoplasmic retention of tfe3, thereby increasing Wnt signaling. Acts as an inhibitor of browning of adipose tissue by regulating mTOR-dependent cytoplasmic retention of tfe3. In response to flow stress, regulates STK11/LKB1 accumulation and mTORC1 activation through primary cilia. Required for starvation-induced perinuclear clustering of lysosomes by promoting association of rilp with its effector rab34. Involved in the control of embryonic stem cells differentiation; together with lamtor1 it is necessary to recruit and activate RagC/RRAGC and RagD/RRAGD at the lysosomes, and to induce exit of embryonic stem cells from pluripotency via non-canonical, mTOR-independent tfe3 inactivation. Regulates glycolysis by binding to lactate dehydrogenase ldha, acting as an uncompetitive inhibitor. This chain is Folliculin, found in Xenopus tropicalis (Western clawed frog).